The primary structure comprises 240 residues: DNA repair protein RecO (240 aa).

This sequence belongs to the RecO family.

In terms of biological role, involved in DNA repair and RecF pathway recombination. The protein is DNA repair protein RecO of Pseudoalteromonas atlantica (strain T6c / ATCC BAA-1087).